Consider the following 133-residue polypeptide: Ribosome-binding factor A (133 aa).

The protein belongs to the RbfA family. As to quaternary structure, monomer. Binds 30S ribosomal subunits, but not 50S ribosomal subunits or 70S ribosomes.

The protein resides in the cytoplasm. In terms of biological role, one of several proteins that assist in the late maturation steps of the functional core of the 30S ribosomal subunit. Associates with free 30S ribosomal subunits (but not with 30S subunits that are part of 70S ribosomes or polysomes). Required for efficient processing of 16S rRNA. May interact with the 5'-terminal helix region of 16S rRNA. The polypeptide is Ribosome-binding factor A (Salmonella heidelberg (strain SL476)).